The chain runs to 547 residues: Cilia- and flagella- associated protein 210 (547 aa).

3 coiled-coil regions span residues 50–131 (ERIR…RKKA), 183–251 (VKLN…MKKN), and 342–405 (IARD…KADK). The segment at 214-237 (KQIEEHKEEEEARKKSEEKDAEEM) is disordered.

In terms of assembly, microtubule inner protein component of sperm flagellar doublet microtubules.

The protein resides in the cytoplasm. Its subcellular location is the cytoskeleton. The protein localises to the cilium axoneme. It localises to the flagellum axoneme. Its function is as follows. Microtubule inner protein (MIP) part of the dynein-decorated doublet microtubules (DMTs) in cilia axoneme, which is required for motile cilia beating. The chain is Cilia- and flagella- associated protein 210 (Cfap210) from Mus musculus (Mouse).